A 382-amino-acid polypeptide reads, in one-letter code: Chaperone protein DnaJ (382 aa).

Residues 4 to 69 form the J domain; the sequence is DYYEVLGVSR…DKRRRYDQFG (66 aa). The CR-type zinc-finger motif lies at 138-219; sequence GVEKTIKIKK…CYGEGIKQGE (82 aa). 8 residues coordinate Zn(2+): cysteine 151, cysteine 154, cysteine 167, cysteine 170, cysteine 193, cysteine 196, cysteine 207, and cysteine 210. CXXCXGXG motif repeat units follow at residues 151–158, 167–174, 193–200, and 207–214; these read CKECNGSG, CPTCHGAG, CPTCGGEG, and CPSCYGEG.

The protein belongs to the DnaJ family. Homodimer. Zn(2+) serves as cofactor.

The protein localises to the cytoplasm. Its function is as follows. Participates actively in the response to hyperosmotic and heat shock by preventing the aggregation of stress-denatured proteins and by disaggregating proteins, also in an autonomous, DnaK-independent fashion. Unfolded proteins bind initially to DnaJ; upon interaction with the DnaJ-bound protein, DnaK hydrolyzes its bound ATP, resulting in the formation of a stable complex. GrpE releases ADP from DnaK; ATP binding to DnaK triggers the release of the substrate protein, thus completing the reaction cycle. Several rounds of ATP-dependent interactions between DnaJ, DnaK and GrpE are required for fully efficient folding. Also involved, together with DnaK and GrpE, in the DNA replication of plasmids through activation of initiation proteins. The polypeptide is Chaperone protein DnaJ (Chlorobium luteolum (strain DSM 273 / BCRC 81028 / 2530) (Pelodictyon luteolum)).